The chain runs to 286 residues: Ribosomal RNA small subunit methyltransferase A (286 aa).

The S-adenosyl-L-methionine site is built by N31, I33, G58, E80, D106, and N125.

Belongs to the class I-like SAM-binding methyltransferase superfamily. rRNA adenine N(6)-methyltransferase family. RsmA subfamily.

The protein localises to the cytoplasm. The enzyme catalyses adenosine(1518)/adenosine(1519) in 16S rRNA + 4 S-adenosyl-L-methionine = N(6)-dimethyladenosine(1518)/N(6)-dimethyladenosine(1519) in 16S rRNA + 4 S-adenosyl-L-homocysteine + 4 H(+). In terms of biological role, specifically dimethylates two adjacent adenosines (A1518 and A1519) in the loop of a conserved hairpin near the 3'-end of 16S rRNA in the 30S particle. May play a critical role in biogenesis of 30S subunits. The chain is Ribosomal RNA small subunit methyltransferase A from Wolbachia pipientis wMel.